A 394-amino-acid polypeptide reads, in one-letter code: Nicotinate phosphoribosyltransferase (394 aa).

Phosphohistidine; by autocatalysis is present on His218.

The protein belongs to the NAPRTase family. Post-translationally, transiently phosphorylated on a His residue during the reaction cycle. Phosphorylation strongly increases the affinity for substrates and increases the rate of nicotinate D-ribonucleotide production. Dephosphorylation regenerates the low-affinity form of the enzyme, leading to product release.

It carries out the reaction nicotinate + 5-phospho-alpha-D-ribose 1-diphosphate + ATP + H2O = nicotinate beta-D-ribonucleotide + ADP + phosphate + diphosphate. It functions in the pathway cofactor biosynthesis; NAD(+) biosynthesis; nicotinate D-ribonucleotide from nicotinate: step 1/1. Catalyzes the synthesis of beta-nicotinate D-ribonucleotide from nicotinate and 5-phospho-D-ribose 1-phosphate at the expense of ATP. This is Nicotinate phosphoribosyltransferase from Xylella fastidiosa (strain 9a5c).